Consider the following 274-residue polypeptide: 5'-3' exoribonuclease (274 aa).

Mn(2+)-binding residues include histidine 8, histidine 10, aspartate 15, histidine 40, glutamate 65, histidine 76, histidine 190, aspartate 247, and histidine 249.

It belongs to the PHP family. TrpH/YciV subfamily. The cofactor is Mn(2+).

It catalyses the reaction a ribonucleoside 3',5'-bisphosphate + H2O = a ribonucleoside 5'-phosphate + phosphate. Functionally, efficiently catalyzes the hydrolysis of the 3'-phosphate from 3',5'-bis-phosphonucleotides as well as the successive hydrolysis of 5'-phosphomononucleotides from the 5'-end of short pieces of RNA and DNA, with no specificity toward the identity of the nucleotide base. Is more efficient at hydrolyzing RNA oligonucleotides than DNA oligonucleotides. This enzyme can also hydrolyze annealed DNA duplexes, albeit at a catalytic efficiency lower than that of the corresponding single-stranded oligonucleotides. The chain is 5'-3' exoribonuclease from Haemophilus influenzae (strain ATCC 51907 / DSM 11121 / KW20 / Rd).